The following is a 135-amino-acid chain: Translation initiation factor 2 subunit beta (135 aa).

It belongs to the eIF-2-beta/eIF-5 family. As to quaternary structure, heterotrimer composed of an alpha, a beta and a gamma chain.

Functionally, eIF-2 functions in the early steps of protein synthesis by forming a ternary complex with GTP and initiator tRNA. This chain is Translation initiation factor 2 subunit beta, found in Methanobrevibacter smithii (strain ATCC 35061 / DSM 861 / OCM 144 / PS).